Reading from the N-terminus, the 365-residue chain is Zinc transporter 7 (365 aa).

Positions 1 to 26 (MAYSKACYKLTTITILLLSFTLPSLA) are cleaved as a signal peptide. Topologically, residues 27–56 (GNAENADVSECKAESGDLSCHNNKEAQKLK) are extracellular. A helical transmembrane segment spans residues 57-77 (IIAIPSILVASMIGVSLPLFS). Topologically, residues 78-90 (RSIPALGPDREMS) are cytoplasmic. The helical transmembrane segment at 91-111 (VIVKTLASGVILATGFMHVLP) threads the bilayer. Residues 112–129 (DSFDDLTSKCLPEDPWQK) are Extracellular-facing. A helical membrane pass occupies residues 130–150 (FPFATFITMISALLVLMIESF). At 151-210 (AMCAYARRTSKREGEVVPLENGSNSVDTQNDIQTLENGSSYVEKQEKVNEDKTSELLRNK) the chain is on the cytoplasmic side. The chain crosses the membrane as a helical span at residues 211-231 (VIAQILELGIVVHSVVIGLAM). Topologically, residues 232–242 (GASDNKCTVQS) are extracellular. Residues 243–263 (LIAALCFHQLFEGMGLGGSIL) traverse the membrane as a helical segment. At 264–272 (QAQFKSKTN) the chain is on the cytoplasmic side. The helical transmembrane segment at 273–293 (WTMVFFFSVTTPFGIVLGMAI) threads the bilayer. Residues 294–304 (QKIYDETSPTA) are Extracellular-facing. The helical transmembrane segment at 305–325 (LIVVGVLNACSAGLLIYMALV) threads the bilayer. Topologically, residues 326 to 344 (NLLAHEFFGPKIQGNIKLH) are cytoplasmic. A helical membrane pass occupies residues 345-365 (VLGYVATFTGAAGMSLMAKWA).

The protein belongs to the ZIP transporter (TC 2.A.5) family.

The protein localises to the cell membrane. In terms of biological role, probably mediates zinc uptake from the rhizosphere. The polypeptide is Zinc transporter 7 (ZIP7) (Arabidopsis thaliana (Mouse-ear cress)).